Reading from the N-terminus, the 1103-residue chain is Retinal guanylyl cyclase 2 (1103 aa).

A signal peptide spans 1–46 (MFLAPWPFSHLMLWFVTLGRQRGQHGLASFKLLWCLWLLVLMSLPL). Residues 47 to 465 (QVWAPPYKIG…DGRICQGGIN (419 aa)) lie on the Extracellular side of the membrane. An intrachain disulfide couples cysteine 104 to cysteine 132. Residues 466-490 (PTFALMVCLALLIALLSINGFAYFI) form a helical membrane-spanning segment. The Cytoplasmic segment spans residues 491–1103 (RHRINKIQLI…FQRRKQKSSW (613 aa)). Positions 532–812 (FQITSEVQSG…DEIFNQFKTF (281 aa)) constitute a Protein kinase domain. The 131-residue stretch at 884 to 1014 (TLYFSDIVGF…DTVNTASRME (131 aa)) folds into the Guanylate cyclase domain.

It belongs to the adenylyl cyclase class-4/guanylyl cyclase family. As to quaternary structure, homodimer. Interacts with RD3; promotes the exit of GUCY2F from the endoplasmic reticulum and its trafficking to the photoreceptor outer segments. In terms of processing, there are 9 conserved cysteine residues in sensory guanylate cyclases, 6 in the extracellular domain, which may be involved in intra- or interchain disulfide bonds. In terms of tissue distribution, expressed specifically in retina.

It is found in the membrane. The protein resides in the photoreceptor outer segment membrane. The enzyme catalyses GTP = 3',5'-cyclic GMP + diphosphate. Its activity is regulated as follows. Activated by GUCA1B when free calcium ions concentration is low, and inhibited by GUCA1B when free calcium ions concentration is high. Inhibited by RD3. Responsible for the synthesis of cyclic GMP (cGMP) in rods and cones of photoreceptors. Plays an essential role in phototransduction, by mediating cGMP replenishment. May also participate in the trafficking of membrane-asociated proteins to the photoreceptor outer segment membrane. The polypeptide is Retinal guanylyl cyclase 2 (GUCY2F) (Bos taurus (Bovine)).